Here is a 244-residue protein sequence, read N- to C-terminus: Cell division protein ZapD (244 aa).

It belongs to the ZapD family. In terms of assembly, interacts with FtsZ.

The protein localises to the cytoplasm. Functionally, cell division factor that enhances FtsZ-ring assembly. Directly interacts with FtsZ and promotes bundling of FtsZ protofilaments, with a reduction in FtsZ GTPase activity. This is Cell division protein ZapD from Shewanella oneidensis (strain ATCC 700550 / JCM 31522 / CIP 106686 / LMG 19005 / NCIMB 14063 / MR-1).